The chain runs to 513 residues: Tryptophan--tRNA ligase 1 (513 aa).

The short motif at 86-94 is the 'HIGH' region element; sequence PTGDPHIGH. The short motif at 393-397 is the 'KMSKS' region element; sequence KMSSS.

This sequence belongs to the class-I aminoacyl-tRNA synthetase family.

The protein resides in the cytoplasm. It carries out the reaction tRNA(Trp) + L-tryptophan + ATP = L-tryptophyl-tRNA(Trp) + AMP + diphosphate + H(+). The chain is Tryptophan--tRNA ligase 1 from Halobacterium salinarum (strain ATCC 700922 / JCM 11081 / NRC-1) (Halobacterium halobium).